The sequence spans 962 residues: Putative primase C962R (962 aa).

The SF3 helicase domain maps to 607 to 775; sequence ELDARLWIMF…PDPGNPYEKK (169 aa). 636–643 is an ATP binding site; it reads GGGCNGKT.

Belongs to the asfivirus helicase C962R family.

This chain is Putative primase C962R, found in African swine fever virus (strain Badajoz 1971 Vero-adapted) (Ba71V).